Here is a 268-residue protein sequence, read N- to C-terminus: 4-hydroxy-tetrahydrodipicolinate reductase (268 aa).

NAD(+) is bound by residues 8-13 (GAAGRM) and Glu34. Arg35 contacts NADP(+). Residues 96-98 (GST) and 120-123 (SPNM) each bind NAD(+). The active-site Proton donor/acceptor is His153. His154 contributes to the (S)-2,3,4,5-tetrahydrodipicolinate binding site. Residue Lys157 is the Proton donor of the active site. 163-164 (GT) lines the (S)-2,3,4,5-tetrahydrodipicolinate pocket.

Belongs to the DapB family.

The protein resides in the cytoplasm. It catalyses the reaction (S)-2,3,4,5-tetrahydrodipicolinate + NAD(+) + H2O = (2S,4S)-4-hydroxy-2,3,4,5-tetrahydrodipicolinate + NADH + H(+). It carries out the reaction (S)-2,3,4,5-tetrahydrodipicolinate + NADP(+) + H2O = (2S,4S)-4-hydroxy-2,3,4,5-tetrahydrodipicolinate + NADPH + H(+). The protein operates within amino-acid biosynthesis; L-lysine biosynthesis via DAP pathway; (S)-tetrahydrodipicolinate from L-aspartate: step 4/4. In terms of biological role, catalyzes the conversion of 4-hydroxy-tetrahydrodipicolinate (HTPA) to tetrahydrodipicolinate. This is 4-hydroxy-tetrahydrodipicolinate reductase from Anaeromyxobacter sp. (strain Fw109-5).